Consider the following 284-residue polypeptide: 2-dehydro-3-deoxyphosphooctonate aldolase (284 aa).

It belongs to the KdsA family.

It localises to the cytoplasm. It carries out the reaction D-arabinose 5-phosphate + phosphoenolpyruvate + H2O = 3-deoxy-alpha-D-manno-2-octulosonate-8-phosphate + phosphate. It functions in the pathway carbohydrate biosynthesis; 3-deoxy-D-manno-octulosonate biosynthesis; 3-deoxy-D-manno-octulosonate from D-ribulose 5-phosphate: step 2/3. The protein operates within bacterial outer membrane biogenesis; lipopolysaccharide biosynthesis. This chain is 2-dehydro-3-deoxyphosphooctonate aldolase, found in Yersinia pseudotuberculosis serotype O:1b (strain IP 31758).